Reading from the N-terminus, the 347-residue chain is NADH-ubiquinone oxidoreductase chain 2 (347 aa).

The next 10 membrane-spanning stretches (helical) occupy residues 1 to 21 (MTPMTTLIMLFSLLLGTTLTL), 26 to 46 (WLLMWMGLEVSTLAIIPLLTY), 56 to 76 (AIKYFLTQATASMLLMFAASL), 96 to 116 (GIMTFALAMKLGLAPFHYWVP), 153 to 171 (ILLTLAISSTLLGGWNGLN), 178 to 198 (VMAYSSIAHMGWMVLIIIYFP), 199 to 219 (TLTTLNLTLYIMSTVALFTVF), 237 to 257 (APIMTLAIILLLLSLGGLPPL), 277 to 297 (IMATVLAITALLNLFFYMRII), and 326 to 346 (LPTLVILSTTLLPLTPMFITL).

It belongs to the complex I subunit 2 family. In terms of assembly, core subunit of respiratory chain NADH dehydrogenase (Complex I) which is composed of 45 different subunits. Interacts with TMEM242.

Its subcellular location is the mitochondrion inner membrane. The catalysed reaction is a ubiquinone + NADH + 5 H(+)(in) = a ubiquinol + NAD(+) + 4 H(+)(out). Functionally, core subunit of the mitochondrial membrane respiratory chain NADH dehydrogenase (Complex I) which catalyzes electron transfer from NADH through the respiratory chain, using ubiquinone as an electron acceptor. Essential for the catalytic activity and assembly of complex I. The sequence is that of NADH-ubiquinone oxidoreductase chain 2 from Ornithorhynchus anatinus (Duckbill platypus).